A 120-amino-acid polypeptide reads, in one-letter code: Large ribosomal subunit protein uL18 (120 aa).

This sequence belongs to the universal ribosomal protein uL18 family. Part of the 50S ribosomal subunit; part of the 5S rRNA/L5/L18/L25 subcomplex. Contacts the 5S and 23S rRNAs.

Functionally, this is one of the proteins that bind and probably mediate the attachment of the 5S RNA into the large ribosomal subunit, where it forms part of the central protuberance. This is Large ribosomal subunit protein uL18 from Beijerinckia indica subsp. indica (strain ATCC 9039 / DSM 1715 / NCIMB 8712).